A 271-amino-acid polypeptide reads, in one-letter code: Small ribosomal subunit protein uS3 (271 aa).

A KH type-2 domain is found at 40-108 (IRKFLKKRLY…TIIVNIVEVR (69 aa)). The tract at residues 210–271 (PTRDGVNPRE…RPQRTENKGN (62 aa)) is disordered. Residues 215–247 (VNPREESRKSDRRDNKRDNRRNDRRGNDRRGND) show a composition bias toward basic and acidic residues.

Belongs to the universal ribosomal protein uS3 family. Part of the 30S ribosomal subunit. Forms a tight complex with proteins S10 and S14.

Its function is as follows. Binds the lower part of the 30S subunit head. Binds mRNA in the 70S ribosome, positioning it for translation. The sequence is that of Small ribosomal subunit protein uS3 from Clostridioides difficile (strain 630) (Peptoclostridium difficile).